The following is a 365-amino-acid chain: Prostaglandin E2 receptor EP3 subtype (365 aa).

Over 1–30 (MAGVWAPEHSVEAHSNQSSAADGCGSVSVA) the chain is Extracellular. A glycan (N-linked (GlcNAc...) asparagine) is linked at asparagine 16. The helical transmembrane segment at 31-55 (FPITMMVTGFVGNALAMLLVVRSYR) threads the bilayer. Residues 56 to 68 (RRESKRKKSFLLC) are Cytoplasmic-facing. Residues 69–89 (IGWLALTDLVGQLLTSPVVIL) form a helical membrane-spanning segment. The Extracellular segment spans residues 90–108 (VYLSQRRWEQLDPSGRLCT). A disulfide bond links cysteine 107 and cysteine 184. A helical transmembrane segment spans residues 109–130 (FFGLTMTVFGLSSLLVASAMAV). The Cytoplasmic portion of the chain corresponds to 131 to 151 (ERALAIRAPHWYASHMKTRAT). Residues 152 to 173 (PVLLGVWLSVLAFALLPVLGVG) form a helical membrane-spanning segment. At 174–203 (RYSVQWPGTWCFISTGPAGNETDSAREPGS) the chain is on the extracellular side. N-linked (GlcNAc...) asparagine glycosylation is present at asparagine 193. Residues 204-229 (VAFASAFACLGLLALVVTFACNLATI) traverse the membrane as a helical segment. Residues 230–259 (KALVSRCRAKAAASQSSAQWGRITTETAIQ) are Cytoplasmic-facing. Residues 260–283 (LMGIMCVLSVCWSPLLIMMLKMIF) traverse the membrane as a helical segment. Over 284–303 (NQMSVEQCKTQMGKEKECNS) the chain is Extracellular. A helical transmembrane segment spans residues 304 to 325 (FLIAVRLASLNQILDPWVYLLL). Topologically, residues 326-365 (RKILLRKFCQIRDHTNYASSSTSLPCPGSSVLMWSDQLER) are cytoplasmic.

This sequence belongs to the G-protein coupled receptor 1 family. Interacts (via C-terminus) with MKLN1. In terms of assembly, does not interact with MKLN1. In terms of tissue distribution, principally expressed in the tubules of the renal medulla. Specific expression is seen in medullary and cortical thick ascending limbs; lower levels are detected in cortical and inner medullary collecting ducts. Not detected significantly in the glomeruli. In the brain, expressed in all types of glial cells.

The protein localises to the cell membrane. Its function is as follows. Receptor for prostaglandin E2 (PGE2). Required for normal development of fever in response to pyrinogens, including IL1B, prostaglandin E2 and bacterial lipopolysaccharide (LPS). Required for normal potentiation of platelet aggregation by prostaglandin E2, and thus plays a role in the regulation of blood coagulation. Required for increased HCO3(-) secretion in the duodenum in response to mucosal acidification, and thereby contributes to the protection of the mucosa against acid-induced ulceration. Not required for normal kidney function, normal urine volume and osmolality. Receptor for prostaglandin E2 (PGE2); ligand binding activates a signaling cascade via G(i) proteins that leads to the inhibition of adenylate cyclase. In terms of biological role, receptor for prostaglandin E2 (PGE2); ligand binding can activate several distinct signaling cascades, resulting in activation or inhibition of adenylate cyclase. In Rattus norvegicus (Rat), this protein is Prostaglandin E2 receptor EP3 subtype (Ptger3).